The chain runs to 728 residues: U-box domain-containing protein 4 (728 aa).

In terms of domain architecture, U-box spans 296 to 370; sequence SVPKEFSCPI…SQWCGVYGLQ (75 aa). ARM repeat units lie at residues 441 to 483 and 526 to 568; these read GAIP…EQEG and GAVE…ESCA.

The catalysed reaction is S-ubiquitinyl-[E2 ubiquitin-conjugating enzyme]-L-cysteine + [acceptor protein]-L-lysine = [E2 ubiquitin-conjugating enzyme]-L-cysteine + N(6)-ubiquitinyl-[acceptor protein]-L-lysine.. The protein operates within protein modification; protein ubiquitination. Possesses E3 ubiquitin-protein ligase in vitro. The chain is U-box domain-containing protein 4 (PUB4) from Oryza sativa subsp. japonica (Rice).